The following is a 234-amino-acid chain: Leucyl/phenylalanyl-tRNA--protein transferase (234 aa).

The protein belongs to the L/F-transferase family.

It is found in the cytoplasm. It catalyses the reaction N-terminal L-lysyl-[protein] + L-leucyl-tRNA(Leu) = N-terminal L-leucyl-L-lysyl-[protein] + tRNA(Leu) + H(+). The enzyme catalyses N-terminal L-arginyl-[protein] + L-leucyl-tRNA(Leu) = N-terminal L-leucyl-L-arginyl-[protein] + tRNA(Leu) + H(+). It carries out the reaction L-phenylalanyl-tRNA(Phe) + an N-terminal L-alpha-aminoacyl-[protein] = an N-terminal L-phenylalanyl-L-alpha-aminoacyl-[protein] + tRNA(Phe). Functionally, functions in the N-end rule pathway of protein degradation where it conjugates Leu, Phe and, less efficiently, Met from aminoacyl-tRNAs to the N-termini of proteins containing an N-terminal arginine or lysine. The sequence is that of Leucyl/phenylalanyl-tRNA--protein transferase from Pseudoalteromonas atlantica (strain T6c / ATCC BAA-1087).